The sequence spans 109 residues: MKVLVLFSVLFLTLFSYSSTEAMDEFDSDAEEDMLSLMANEQVRAKACTPRLHDCSHDRHSCCRGELFKDVCYCFYPEGEDKTEVCSCQQPKSHKYIEKVVDKARTVVG.

The first 22 residues, 1–22, serve as a signal peptide directing secretion; it reads MKVLVLFSVLFLTLFSYSSTEA. The propeptide occupies 23 to 44; it reads MDEFDSDAEEDMLSLMANEQVR. Residues 45 to 88 form a knottin domain region; the sequence is AKACTPRLHDCSHDRHSCCRGELFKDVCYCFYPEGEDKTEVCSC. Disulfide bonds link Cys-48–Cys-63, Cys-55–Cys-72, Cys-62–Cys-88, and Cys-74–Cys-86. The tract at residues 89–108 is linear cationic cytotoxin domain; it reads QQPKSHKYIEKVVDKARTVV.

It belongs to the neurotoxin 19 (CSTX) family. 05 (U4-Lctx) subfamily. Expressed by the venom gland.

Its subcellular location is the secreted. In terms of biological role, enhances the high-affinity desensitization of human P2RX3 purinoceptors. This Lycosa singoriensis (Wolf spider) protein is U4-lycotoxin-Ls1d.